The chain runs to 65 residues: Large ribosomal subunit protein bL35 (65 aa).

The span at 1–15 (MPKMKTKKSASKRFT) shows a compositional bias: basic residues. 2 disordered regions span residues 1-26 (MPKMKTKKSASKRFTARPGGTIKRGQ) and 38-65 (TKNKRHLRGTEGVHETNLKSVRAMMPYA). Over residues 45-54 (RGTEGVHETN) the composition is skewed to basic and acidic residues.

This sequence belongs to the bacterial ribosomal protein bL35 family.

This Ralstonia pickettii (strain 12J) protein is Large ribosomal subunit protein bL35.